Reading from the N-terminus, the 436-residue chain is Homeobox protein PKNOX1 (436 aa).

The segment covering Met-1–Val-20 has biased composition (polar residues). Residues Met-1–Thr-49 form a disordered region. Ser-33 and Ser-41 each carry phosphoserine. Residues Gly-80–Glu-163 enclose the MEIS N-terminal domain. The homeobox; TALE-type DNA-binding region spans Ser-259–Met-321. The disordered stretch occupies residues Ala-401 to Gln-436. Acidic residues predominate over residues Ser-404–Ala-416.

It belongs to the TALE/MEIS homeobox family. In terms of assembly, interacts with MN1. Ubiquitous. Isoform 2 is expressed in all examined tissues except in bone marrow.

It localises to the nucleus. In terms of biological role, activates transcription in the presence of PBX1A and HOXA1. The polypeptide is Homeobox protein PKNOX1 (Homo sapiens (Human)).